Consider the following 1036-residue polypeptide: Non-canonical non-ribosomal peptide synthetase FUB8 (1036 aa).

The tract at residues 21 to 343 is adenylation (A) domain; that stretch reads EIARDEPDRV…LASVVTHPDE (323 aa). The 78-residue stretch at 544–621 folds into the Carrier domain; the sequence is TTEDVVRSGI…QLAHTVWSHL (78 aa). Serine 579 is subject to O-(pantetheine 4'-phosphoryl)serine. Residues 658-899 form a thioester reductase (TR) domain region; that stretch reads LTGTTGEIGS…IPIDLLTEVI (242 aa).

The protein operates within mycotoxin biosynthesis. Functionally, non-canonical non-ribosomal peptide synthetase; part of the gene cluster that mediates the biosynthesis of fusaric acid, a mycotoxin with low to moderate toxicity to animals and humans, but with high phytotoxic properties. L-aspartate is suggested as fusaric acid amino acid precursor that is activated and further processed to O-acetyl-L-homoserine by cluster enzymes aspartate kinase FUB3 and homoserine O-acetyltransferase FUB5, as well as enzymes of the primary metabolism. The polyketide synthase (PKS) FUB1 generates the triketide trans-2-hexenal which is presumptively released by the hydrolase FUB4 and linked to the NRPS-bound amino acid precursor by NAD(P)-dependent dehydrogenase FUB6. FUB1, FUB4, and the non-canonical NRPS Fub8 may form an enzyme complex. Further processing of the NRPS-bound intermediate might be carried out by FUB6 and the sulfhydrylase FUB7, enabling a spontaneous electrocyclization to close the carbon backbone of fusaric acid. Dihydrofusaric acid is likely to be released via reduction by the thioester reductase (TR) domain of FUB8 whereupon the final oxidation to fusaric acid may (also) be performed by the FMN-dependent dehydrogenase FUB9. The polypeptide is Non-canonical non-ribosomal peptide synthetase FUB8 (Fusarium oxysporum f. sp. lycopersici (strain 4287 / CBS 123668 / FGSC 9935 / NRRL 34936) (Fusarium vascular wilt of tomato)).